Consider the following 361-residue polypeptide: 5-exo-hydroxycamphor dehydrogenase (361 aa).

The Zn(2+) site is built by Cys40, His62, Cys98, Cys101, Cys104, and Cys170.

The protein belongs to the zinc-containing alcohol dehydrogenase family. Requires Zn(2+) as cofactor.

It catalyses the reaction (1R,4R,5R)-5-hydroxycamphor + NAD(+) = (1R,4R)-bornane-2,5-dione + NADH + H(+). The protein operates within terpene metabolism; (R)-camphor degradation. In Pseudomonas putida (Arthrobacter siderocapsulatus), this protein is 5-exo-hydroxycamphor dehydrogenase (camD).